Consider the following 330-residue polypeptide: Ketol-acid reductoisomerase (NADP(+)) (330 aa).

Positions 3-184 constitute a KARI N-terminal Rossmann domain; it reads LPVYYDKDID…GGGRMGVLKT (182 aa). NADP(+) is bound by residues 26–29, Ser52, and Ser54; that span reads YGAQ. His109 is a catalytic residue. Gly135 contacts NADP(+). Residues 185–329 enclose the KARI C-terminal knotted domain; the sequence is SFKEECESDL…EILRAPFNHK (145 aa). The Mg(2+) site is built by Asp193, Glu197, Glu229, and Glu233. Ser254 lines the substrate pocket.

It belongs to the ketol-acid reductoisomerase family. Mg(2+) serves as cofactor.

It carries out the reaction (2R)-2,3-dihydroxy-3-methylbutanoate + NADP(+) = (2S)-2-acetolactate + NADPH + H(+). The catalysed reaction is (2R,3R)-2,3-dihydroxy-3-methylpentanoate + NADP(+) = (S)-2-ethyl-2-hydroxy-3-oxobutanoate + NADPH + H(+). It participates in amino-acid biosynthesis; L-isoleucine biosynthesis; L-isoleucine from 2-oxobutanoate: step 2/4. It functions in the pathway amino-acid biosynthesis; L-valine biosynthesis; L-valine from pyruvate: step 2/4. In terms of biological role, involved in the biosynthesis of branched-chain amino acids (BCAA). Catalyzes an alkyl-migration followed by a ketol-acid reduction of (S)-2-acetolactate (S2AL) to yield (R)-2,3-dihydroxy-isovalerate. In the isomerase reaction, S2AL is rearranged via a Mg-dependent methyl migration to produce 3-hydroxy-3-methyl-2-ketobutyrate (HMKB). In the reductase reaction, this 2-ketoacid undergoes a metal-dependent reduction by NADPH to yield (R)-2,3-dihydroxy-isovalerate. In Helicobacter pylori (strain HPAG1), this protein is Ketol-acid reductoisomerase (NADP(+)).